The following is a 721-amino-acid chain: Nitrogen permease regulator 3 (721 aa).

Positions 1-21 (MSYNLPNPSLIGILLIISTHS) are cleaved as a signal peptide. 2 disordered regions span residues 27–54 (YKQP…ETES) and 555–614 (DLEN…NINA). Over residues 37 to 54 (PDEDEGEYDQEDIAETES) the composition is skewed to acidic residues.

It belongs to the NPR3 family.

Its function is as follows. Mediates inactivation of the TORC1 complex in response to amino acid starvation. Required for meiotic nuclear division. This Scheffersomyces stipitis (strain ATCC 58785 / CBS 6054 / NBRC 10063 / NRRL Y-11545) (Yeast) protein is Nitrogen permease regulator 3 (NPR3).